The sequence spans 205 residues: MSKRISAKHKIDRRMGENIWGRSKSPVNRREYGPGQHGQRRKGKLSDFGVQLRAKQKLKGYYGSIGEKQFHAVYVEASRLKGDTGANLIGLLERRLDAVVYRAKFVPTIFAARQFVNHGHVKVNGRRVNIPSYQVKVGDVIEVREASKQMALVLEAVQLAERDVPDYLEVDHNRLTAKFNRIPELNEVPYPVQMEPNLVVEFYSR.

The interval 19 to 45 (IWGRSKSPVNRREYGPGQHGQRRKGKL) is disordered. One can recognise an S4 RNA-binding domain in the interval 94–157 (RRLDAVVYRA…KQMALVLEAV (64 aa)).

This sequence belongs to the universal ribosomal protein uS4 family. Part of the 30S ribosomal subunit. Contacts protein S5. The interaction surface between S4 and S5 is involved in control of translational fidelity.

Functionally, one of the primary rRNA binding proteins, it binds directly to 16S rRNA where it nucleates assembly of the body of the 30S subunit. In terms of biological role, with S5 and S12 plays an important role in translational accuracy. The sequence is that of Small ribosomal subunit protein uS4 from Azorhizobium caulinodans (strain ATCC 43989 / DSM 5975 / JCM 20966 / LMG 6465 / NBRC 14845 / NCIMB 13405 / ORS 571).